A 24-amino-acid polypeptide reads, in one-letter code: Snake venom metalloproteinase Batx-1 (24 aa).

Residues Y1–R24 form the Peptidase M12B domain. Ca(2+) is bound at residue E3.

This sequence belongs to the venom metalloproteinase (M12B) family. P-I subfamily. Monomer. Zn(2+) serves as cofactor. The N-terminus is blocked. In terms of processing, contains 3 disulfide bonds. As to expression, expressed by the venom gland.

The protein localises to the secreted. Its activity is regulated as follows. Inhibited by EDTA, and o-phenanthroline, but not inhibited by PMSF, pepstatin A, and aprotinin. Functionally, zinc metalloproteinase that exhits a weak hemorrhagic activity. Degrades preferentially the Aalpha- (FGA) and Bbeta-chains (FGB) of fibrinogen, and partially degrades gamma-chain (FGG) at higher concentration. Induces a mild myotoxicity, but lacks coagulant activity on human plasma or bovin fibrinogen and defibrinating activity. The chain is Snake venom metalloproteinase Batx-1 from Bothrops atrox (Barba amarilla).